The following is a 216-amino-acid chain: Small ribosomal subunit protein uS3c (216 aa).

The 76-residue stretch at 43–118 (IKNYIQKNRR…RLKIAITRVE (76 aa)) folds into the KH type-2 domain.

The protein belongs to the universal ribosomal protein uS3 family. Part of the 30S ribosomal subunit.

It localises to the plastid. Its subcellular location is the chloroplast. The chain is Small ribosomal subunit protein uS3c (rps3) from Dioscorea elephantipes (Elephant's foot yam).